The primary structure comprises 230 residues: Orotidine 5'-phosphate decarboxylase (230 aa).

Substrate-binding positions include Asp10, Lys31, 58 to 67 (DLKLHDIPNT), Thr117, Arg179, Gln188, Gly208, and Arg209. Residue Lys60 is the Proton donor of the active site. The segment at 177–196 (GIRPKDASSDDQKRITTPED) is disordered. Positions 179-196 (RPKDASSDDQKRITTPED) are enriched in basic and acidic residues.

This sequence belongs to the OMP decarboxylase family. Type 1 subfamily. In terms of assembly, homodimer.

It catalyses the reaction orotidine 5'-phosphate + H(+) = UMP + CO2. Its pathway is pyrimidine metabolism; UMP biosynthesis via de novo pathway; UMP from orotate: step 2/2. In terms of biological role, catalyzes the decarboxylation of orotidine 5'-monophosphate (OMP) to uridine 5'-monophosphate (UMP). In Staphylococcus saprophyticus subsp. saprophyticus (strain ATCC 15305 / DSM 20229 / NCIMB 8711 / NCTC 7292 / S-41), this protein is Orotidine 5'-phosphate decarboxylase.